A 415-amino-acid chain; its full sequence is 3-isopropylmalate dehydratase large subunit (415 aa).

Residues Cys297, Cys355, and Cys358 each contribute to the [4Fe-4S] cluster site.

Belongs to the aconitase/IPM isomerase family. LeuC type 2 subfamily. Heterodimer of LeuC and LeuD. The cofactor is [4Fe-4S] cluster.

It catalyses the reaction (2R,3S)-3-isopropylmalate = (2S)-2-isopropylmalate. It functions in the pathway amino-acid biosynthesis; L-leucine biosynthesis; L-leucine from 3-methyl-2-oxobutanoate: step 2/4. In terms of biological role, catalyzes the isomerization between 2-isopropylmalate and 3-isopropylmalate, via the formation of 2-isopropylmaleate. This Metallosphaera sedula (strain ATCC 51363 / DSM 5348 / JCM 9185 / NBRC 15509 / TH2) protein is 3-isopropylmalate dehydratase large subunit.